The sequence spans 37 residues: Large ribosomal subunit protein bL36 (37 aa).

Zn(2+) contacts are provided by Cys-11, Cys-14, Cys-27, and His-32.

It belongs to the bacterial ribosomal protein bL36 family. Part of the 50S ribosomal subunit. Zn(2+) is required as a cofactor.

Binds the 23S rRNA. In Deinococcus radiodurans (strain ATCC 13939 / DSM 20539 / JCM 16871 / CCUG 27074 / LMG 4051 / NBRC 15346 / NCIMB 9279 / VKM B-1422 / R1), this protein is Large ribosomal subunit protein bL36 (rpmJ).